We begin with the raw amino-acid sequence, 261 residues long: 3-hydroxyacyl-CoA dehydrogenase type-2 (261 aa).

The residue at position 2 (A2) is an N-acetylalanine. Residues S20 and D41 each coordinate NAD(+). Position 53 is an N6-acetyllysine; alternate (K53). Position 53 is an N6-succinyllysine; alternate (K53). V65 contacts NAD(+). K69 is subject to N6-acetyllysine. Position 91 (C91) interacts with NAD(+). K99 and K105 each carry N6-acetyllysine. K107 is subject to N6-acetyllysine; alternate. Residue K107 is modified to N6-succinyllysine; alternate. S155 lines the substrate pocket. Residues Y168, K172, F201, and T203 each contribute to the NAD(+) site. The Proton acceptor role is filled by Y168. K212 carries the N6-acetyllysine; alternate modification. K212 bears the N6-succinyllysine; alternate mark.

The protein belongs to the short-chain dehydrogenases/reductases (SDR) family. As to quaternary structure, homotetramer. Component of mitochondrial ribonuclease P, a complex composed of TRMT10C/MRPP1, HSD17B10/MRPP2 and PRORP/MRPP3. Interacts with TRMT10C/MRPP1; forming the MRPP1-MRPP2 subcomplex of the mitochondrial ribonuclease P complex.

It is found in the mitochondrion. It localises to the mitochondrion matrix. The protein localises to the mitochondrion nucleoid. The enzyme catalyses a (3S)-3-hydroxyacyl-CoA + NAD(+) = a 3-oxoacyl-CoA + NADH + H(+). It catalyses the reaction (2S,3S)-3-hydroxy-2-methylbutanoyl-CoA + NAD(+) = 2-methyl-3-oxobutanoyl-CoA + NADH + H(+). The catalysed reaction is testosterone + NAD(+) = androst-4-ene-3,17-dione + NADH + H(+). It carries out the reaction 5alpha-androstane-3alpha,17beta-diol + NAD(+) = 17beta-hydroxy-5alpha-androstan-3-one + NADH + H(+). The enzyme catalyses 17beta-estradiol + NAD(+) = estrone + NADH + H(+). It catalyses the reaction cholate + NAD(+) = 3alpha,12alpha-dihydroxy-7-oxo-5beta-cholanate + NADH + H(+). The catalysed reaction is (3S)-3-hydroxybutanoyl-CoA + NAD(+) = acetoacetyl-CoA + NADH + H(+). It carries out the reaction (3S)-hydroxyoctanoyl-CoA + NAD(+) = 3-oxooctanoyl-CoA + NADH + H(+). The enzyme catalyses (3S)-hydroxyhexadecanoyl-CoA + NAD(+) = 3-oxohexadecanoyl-CoA + NADH + H(+). It catalyses the reaction 17beta-hydroxy-5alpha-androstan-3-one + NAD(+) = 5alpha-androstan-3,17-dione + NADH + H(+). The catalysed reaction is 5alpha-pregnan-20beta-ol-3-one + NAD(+) = 5alpha-pregnane-3,20-dione + NADH + H(+). It carries out the reaction 3alpha-hydroxy-5alpha-pregnan-20-one + NAD(+) = 5alpha-pregnane-3,20-dione + NADH + H(+). The enzyme catalyses cortisone + NAD(+) = 17alpha-hydroxypregn-4-en-3,11,20-trione-21-al + NADH + H(+). It catalyses the reaction 11-dehydrocorticosterone + NAD(+) = pregn-4-ene-3,11,20,21-tetraone + NADH + H(+). The catalysed reaction is cortisol + NAD(+) = 11beta,17alpha-dihydroxypregn-4-ene-3,20,21-trione + NADH + H(+). It carries out the reaction chenodeoxycholate + NAD(+) = 7-oxolithocholate + NADH + H(+). The enzyme catalyses ursodeoxycholate + NAD(+) = 7-oxolithocholate + NADH + H(+). It catalyses the reaction 3beta,7beta-dihydroxy-5beta-cholan-24-oate + NAD(+) = 3beta-hydroxy-7-oxo-5beta-cholan-24-oate + NADH + H(+). It participates in amino-acid degradation; L-isoleucine degradation. Its pathway is lipid metabolism; fatty acid beta-oxidation. The protein operates within steroid metabolism. It functions in the pathway lipid metabolism; bile acid biosynthesis. Mitochondrial dehydrogenase involved in pathways of fatty acid, branched-chain amino acid and steroid metabolism. Acts as (S)-3-hydroxyacyl-CoA dehydrogenase in mitochondrial fatty acid beta-oxidation, a major degradation pathway of fatty acids. Catalyzes the third step in the beta-oxidation cycle, namely the reversible conversion of (S)-3-hydroxyacyl-CoA to 3-ketoacyl-CoA. Preferentially accepts straight medium- and short-chain acyl-CoA substrates with highest efficiency for (3S)-hydroxybutanoyl-CoA. Acts as 3-hydroxy-2-methylbutyryl-CoA dehydrogenase in branched-chain amino acid catabolic pathway. Catalyzes the oxidation of 3-hydroxy-2-methylbutanoyl-CoA into 2-methyl-3-oxobutanoyl-CoA, a step in isoleucine degradation pathway. Has hydroxysteroid dehydrogenase activity toward steroid hormones and bile acids. Catalyzes the oxidation of 3alpha-, 17beta-, 20beta- and 21-hydroxysteroids and 7alpha- and 7beta-hydroxy bile acids. Oxidizes allopregnanolone/brexanolone at the 3alpha-hydroxyl group, which is known to be critical for the activation of gamma-aminobutyric acid receptors (GABAARs) chloride channel. Has phospholipase C-like activity toward cardiolipin and its oxidized species. Likely oxidizes the 2'-hydroxyl in the head group of cardiolipin to form a ketone intermediate that undergoes nucleophilic attack by water and fragments into diacylglycerol, dihydroxyacetone and orthophosphate. Has higher affinity for cardiolipin with oxidized fatty acids and may degrade these species during the oxidative stress response to protect cells from apoptosis. By interacting with intracellular amyloid-beta, it may contribute to the neuronal dysfunction associated with Alzheimer disease (AD). Essential for structural and functional integrity of mitochondria. In terms of biological role, in addition to mitochondrial dehydrogenase activity, moonlights as a component of mitochondrial ribonuclease P, a complex that cleaves tRNA molecules in their 5'-ends. Together with TRMT10C/MRPP1, forms a subcomplex of the mitochondrial ribonuclease P, named MRPP1-MRPP2 subcomplex, which displays functions that are independent of the ribonuclease P activity. The MRPP1-MRPP2 subcomplex catalyzes the formation of N(1)-methylguanine and N(1)-methyladenine at position 9 (m1G9 and m1A9, respectively) in tRNAs; HSD17B10/MRPP2 acting as a non-catalytic subunit. The MRPP1-MRPP2 subcomplex also acts as a tRNA maturation platform: following 5'-end cleavage by the mitochondrial ribonuclease P complex, the MRPP1-MRPP2 subcomplex enhances the efficiency of 3'-processing catalyzed by ELAC2, retains the tRNA product after ELAC2 processing and presents the nascent tRNA to the mitochondrial CCA tRNA nucleotidyltransferase TRNT1 enzyme. Associates with mitochondrial DNA complexes at the nucleoids to initiate RNA processing and ribosome assembly. In Mus musculus (Mouse), this protein is 3-hydroxyacyl-CoA dehydrogenase type-2 (Hsd17b10).